A 309-amino-acid chain; its full sequence is Protein FdhE homolog (309 aa).

Belongs to the FdhE family.

The protein resides in the cytoplasm. Necessary for formate dehydrogenase activity. The chain is Protein FdhE homolog from Yersinia pestis bv. Antiqua (strain Antiqua).